A 417-amino-acid chain; its full sequence is Magnesium-protoporphyrin IX monomethyl ester [oxidative] cyclase, chloroplastic (417 aa).

The N-terminal 45 residues, 1 to 45 (MASAMELSLLNPAMHHYGIAAKTASHLPVVPARRASSGAVRFRVR), are a transit peptide targeting the chloroplast.

Belongs to the AcsF family. The cofactor is Fe cation.

The protein localises to the plastid. Its subcellular location is the chloroplast membrane. It catalyses the reaction Mg-protoporphyrin IX 13-monomethyl ester + 3 NADPH + 3 O2 + 2 H(+) = 3,8-divinyl protochlorophyllide a + 3 NADP(+) + 5 H2O. The protein operates within porphyrin-containing compound metabolism; chlorophyll biosynthesis. Its function is as follows. Catalyzes the formation of the isocyclic ring in chlorophyll biosynthesis. Mediates the cyclase reaction, which results in the formation of divinylprotochlorophyllide (Pchlide) characteristic of all chlorophylls from magnesium-protoporphyrin IX 13-monomethyl ester (MgPMME). The chain is Magnesium-protoporphyrin IX monomethyl ester [oxidative] cyclase, chloroplastic (CRD1) from Hordeum vulgare (Barley).